Consider the following 658-residue polypeptide: Integrator complex subunit 9 (658 aa).

Lys2 and Phe19 together coordinate 1D-myo-inositol hexakisphosphate. Lys58 is covalently cross-linked (Glycyl lysine isopeptide (Lys-Gly) (interchain with G-Cter in SUMO2)). 1D-myo-inositol hexakisphosphate-binding residues include Lys510 and Arg511. The disordered stretch occupies residues 548–574 (DNKHLLQPPPRPAQPTSGKKRKRVSDD). A Nuclear localization signal motif is present at residues 566-570 (KKRKR).

This sequence belongs to the metallo-beta-lactamase superfamily. RNA-metabolizing metallo-beta-lactamase-like family. INTS9 subfamily. As to quaternary structure, component of the Integrator complex, composed of core subunits INTS1, INTS2, INTS3, INTS4, INTS5, INTS6, INTS7, INTS8, INTS9/RC74, INTS10, INTS11/CPSF3L, INTS12, INTS13, INTS14 and INTS15. The core complex associates with protein phosphatase 2A subunits PPP2CA and PPP2R1A, to form the Integrator-PP2A (INTAC) complex. INTS9 is part of the RNA endonuclease subcomplex, composed of INTS4, INTS9, INTS11 and inositol hexakisphosphate (InsP6). Interacts with WDR73; interaction is required for the assembly of the RNA endonuclease subcomplex in the cytoplasm. Interacts with BRAT1; interaction is required for the assembly of the RNA endonuclease subcomplex. Interacts with ESRRB, ESRRB is not a core component of the Integrator complex and this association is a bridge for the interaction with the multiprotein complex Integrator; attracts the transcriptional machinery.

The protein localises to the nucleus. It is found in the cytoplasm. In terms of biological role, component of the integrator complex, a multiprotein complex that terminates RNA polymerase II (Pol II) transcription in the promoter-proximal region of genes. The integrator complex provides a quality checkpoint during transcription elongation by driving premature transcription termination of transcripts that are unfavorably configured for transcriptional elongation: the complex terminates transcription by (1) catalyzing dephosphorylation of the C-terminal domain (CTD) of Pol II subunit POLR2A/RPB1 and SUPT5H/SPT5, (2) degrading the exiting nascent RNA transcript via endonuclease activity and (3) promoting the release of Pol II from bound DNA. The integrator complex is also involved in terminating the synthesis of non-coding Pol II transcripts, such as enhancer RNAs (eRNAs), small nuclear RNAs (snRNAs), telomerase RNAs and long non-coding RNAs (lncRNAs). Mediates recruitment of cytoplasmic dynein to the nuclear envelope, probably as component of the integrator complex. The chain is Integrator complex subunit 9 from Homo sapiens (Human).